We begin with the raw amino-acid sequence, 287 residues long: ATP synthase gamma chain (287 aa).

The protein belongs to the ATPase gamma chain family. As to quaternary structure, F-type ATPases have 2 components, CF(1) - the catalytic core - and CF(0) - the membrane proton channel. CF(1) has five subunits: alpha(3), beta(3), gamma(1), delta(1), epsilon(1). CF(0) has three main subunits: a, b and c.

It localises to the cell inner membrane. In terms of biological role, produces ATP from ADP in the presence of a proton gradient across the membrane. The gamma chain is believed to be important in regulating ATPase activity and the flow of protons through the CF(0) complex. This chain is ATP synthase gamma chain, found in Hahella chejuensis (strain KCTC 2396).